A 1792-amino-acid chain; its full sequence is Brefeldin A-inhibited guanine nucleotide-exchange protein 2 (1792 aa).

N-acetylmethionine is present on M1. Positions 2–224 (QESQTKSMFV…KPQSPVIQAT (223 aa)) are DCB; DCB:DCB domain and DCB:HUS domain interaction. The interval 207 to 294 (ELEKPMQSKP…SRGTDSGAQE (88 aa)) is disordered. 3 positions are modified to phosphoserine: S214, S218, and S227. A compositionally biased stretch (polar residues) spans 214–225 (SKPQSPVIQATA). The span at 233–243 (LKQSQAQSKPT) shows a compositional bias: polar residues. The residue at position 244 (T244) is a Phosphothreonine. Phosphoserine is present on residues S355 and S356. Positions 515–535 (ADAQCVVDIYVNYDCDLNAAN) are HUS; DCB:HUS domain interaction. Phosphoserine is present on S621. The residue at position 623 (T623) is a Phosphothreonine. Residue S624 is modified to Phosphoserine. T633 is modified (phosphothreonine). An SEC7 domain is found at 661-792 (FNKKPKRGIQ…IIMLTTDLHS (132 aa)). Phosphoserine occurs at positions 707, 1518, 1520, 1521, 1532, 1535, 1541, and 1789.

Homodimer. Interacts with ARFGEF1/BIG1; both proteins are probably part of the same or very similar macromolecular complexes. Interacts with PRKAR1A, PRKAR2A, PRKAR1B, PRKAR2B, PPP1CC, PDE3A, TNFRSF1A, MYCBP and EXOC7. Interacts with GABRB1, GABRB2 and GABRB3. Post-translationally, in vitro phosphorylated by PKA reducing its GEF activity and dephosphorylated by phosphatase PP1.

Its subcellular location is the cytoplasm. It is found in the membrane. The protein localises to the golgi apparatus. The protein resides in the perinuclear region. It localises to the trans-Golgi network. Its subcellular location is the endosome. It is found in the cytoskeleton. The protein localises to the microtubule organizing center. The protein resides in the centrosome. It localises to the cell projection. Its subcellular location is the dendrite. It is found in the cytoplasmic vesicle. The protein localises to the synapse. With respect to regulation, inhibited by brefeldin A. In terms of biological role, promotes guanine-nucleotide exchange on ARF1 and ARF3 and to a lower extent on ARF5 and ARF6. Promotes the activation of ARF1/ARF5/ARF6 through replacement of GDP with GTP. Involved in the regulation of Golgi vesicular transport. Required for the integrity of the endosomal compartment. Involved in trafficking from the trans-Golgi network (TGN) to endosomes and is required for membrane association of the AP-1 complex and GGA1. Seems to be involved in recycling of the transferrin receptor from recycling endosomes to the plasma membrane. Probably is involved in the exit of GABA(A) receptors from the endoplasmic reticulum. Involved in constitutive release of tumor necrosis factor receptor 1 via exosome-like vesicles; the function seems to involve PKA and specifically PRKAR2B. Proposed to act as A kinase-anchoring protein (AKAP) and may mediate crosstalk between Arf and PKA pathways. This is Brefeldin A-inhibited guanine nucleotide-exchange protein 2 (Arfgef2) from Mus musculus (Mouse).